The sequence spans 1283 residues: 5-oxoprolinase PfmaA (1283 aa).

Residues 1256-1283 are disordered; that stretch reads NTPGGGAWGKPEGDADGYREEDQAGDGI. Residues 1266–1277 are compositionally biased toward basic and acidic residues; it reads PEGDADGYREED.

This sequence belongs to the oxoprolinase family. Homodimer.

The enzyme catalyses 5-oxo-L-proline + ATP + 2 H2O = L-glutamate + ADP + phosphate + H(+). Its function is as follows. 5-oxoprolinase; part of the gene cluster that mediates the biosynthesis of dihydroxynaphthalene (DHN)-melanin, a bluish-green pigment forming a dark layer in the conidial wall that protects the conidia from UV radiations. The first step of the pathway is the production of the pentaketide 1,3,6,8-tetrahydroxynaphthalene (1,3,6,8-THN or T4HN) by the polyketide synthase PfmaE though condensation of acetyl-CoA with malonyl-CoA. T4HN is not stable and easily oxidizes into the stable form flaviolin. T4HN is also substrate of the hydroxynaphthalene reductase PfmaG to yield scytalone. The scytalone dehydratase PfmaJ then reduces scytalone to 1,3,8-THN. 1,3,8-THN is then substrate of the hydroxynaphthalene reductase PfmaI to yield vermelone. Vermelone is further converted by the multicopper oxidase PfmaD to 1,8-DHN. Finally the laccase PFICI_06862 transforms 1,8-DHN to DHN-melanin. The roles of the 5-oxoprolinase PfmaA and the proline iminopeptidase PfmaB within the cluster have not been elucidated yet. The sequence is that of 5-oxoprolinase PfmaA from Pestalotiopsis fici (strain W106-1 / CGMCC3.15140).